A 757-amino-acid polypeptide reads, in one-letter code: Protein ALTERED SEED GERMINATION 2 (757 aa).

WD repeat units follow at residues 6-43, 48-87, 91-132, 145-185, 213-253, and 277-316; these read FHDGNIFNLLHTRSQDPSHEVDQRMQFHSSLVRRLSQE, GHQGCVNALAWNSNGSLLISGSDDLRINIWNYSSRKLLHS, GHTA…GRAE, CHTR…SCPP, KQTL…PLAS, and RTNLHLTHVTFSPNGEEVLLSYSGEHVYLMNVNNGICSTG. A Nuclear localization signal motif is present at residues 245–257; sequence RRMLPPLASSRKR. The TPR repeat unit spans residues 442–475; it reads FKAHYYMSEALQQLGKCKEALDFATAAQHMNPSD. The interval 519–601 is disordered; sequence ANSDSSHDMS…SSSQNDRTSY (83 aa). Residues 523–532 are compositionally biased toward basic and acidic residues; it reads SSHDMSRSER. Residues 533-543 show a composition bias toward acidic residues; that stretch reads EDSDYDEELEL. The span at 582–601 shows a compositional bias: polar residues; the sequence is TVDNASSGTASSSQNDRTSY. WD repeat units lie at residues 618-658 and 661-700; these read NVGT…LMKV and GDESVLNCIQCHPFDSVVATSGIDNTIKIWSPTASVPSIV. Cys754 is lipidated: S-12-hydroxyfarnesyl cysteine; by FTB/ERA1.

In terms of assembly, interacts with DDB1; the subcellular localization of this complex depends on farnesylation status. Binds to HDA9 in the cytosol when farnesylated. Farnesylated at Cys-754 by FTB/ERA1; this modification triggers an exclusion from the nucleus.

The protein localises to the nucleus. The protein resides in the cytoplasm. It is found in the cytosol. It participates in protein modification; protein ubiquitination. In terms of biological role, may function as a substrate adapter for CUL4-DDB1 E3 ubiquitin-protein ligase complex. Negative regulator of fatty acid biosynthetic process and accumulation. Acts as an abscisic acid (ABA) negative regulator. Involved in responses to salt (NaCl) and osmotic (e.g. in response to mannitol and PEG) stresses. The protein is Protein ALTERED SEED GERMINATION 2 of Arabidopsis thaliana (Mouse-ear cress).